The sequence spans 192 residues: Per os infectivity factor 6 (192 aa).

Residues 154–174 (IAYVFLFFICIVLLSVLAVFF) traverse the membrane as a helical segment.

Its subcellular location is the host membrane. It is found in the virion. It localises to the host cytoplasm. The protein localises to the host nucleus. In terms of biological role, per os infectivity factor. This is Per os infectivity factor 6 (AC68) from Autographa californica nuclear polyhedrosis virus (AcMNPV).